The following is a 443-amino-acid chain: 3-isopropylmalate dehydratase large subunit (443 aa).

Cys347, Cys407, and Cys410 together coordinate [4Fe-4S] cluster.

This sequence belongs to the aconitase/IPM isomerase family. LeuC type 1 subfamily. Heterodimer of LeuC and LeuD. It depends on [4Fe-4S] cluster as a cofactor.

The catalysed reaction is (2R,3S)-3-isopropylmalate = (2S)-2-isopropylmalate. Its pathway is amino-acid biosynthesis; L-leucine biosynthesis; L-leucine from 3-methyl-2-oxobutanoate: step 2/4. Its function is as follows. Catalyzes the isomerization between 2-isopropylmalate and 3-isopropylmalate, via the formation of 2-isopropylmaleate. This is 3-isopropylmalate dehydratase large subunit from Buchnera aphidicola subsp. Uroleucon obscurum.